The primary structure comprises 302 residues: 4-diphosphocytidyl-2-C-methyl-D-erythritol kinase (302 aa).

Lys27 is an active-site residue. 110–120 (PMGGGVGGGSS) contributes to the ATP binding site. The active site involves Asp152.

Belongs to the GHMP kinase family. IspE subfamily.

It carries out the reaction 4-CDP-2-C-methyl-D-erythritol + ATP = 4-CDP-2-C-methyl-D-erythritol 2-phosphate + ADP + H(+). Its pathway is isoprenoid biosynthesis; isopentenyl diphosphate biosynthesis via DXP pathway; isopentenyl diphosphate from 1-deoxy-D-xylulose 5-phosphate: step 3/6. Functionally, catalyzes the phosphorylation of the position 2 hydroxy group of 4-diphosphocytidyl-2C-methyl-D-erythritol. The sequence is that of 4-diphosphocytidyl-2-C-methyl-D-erythritol kinase from Mannheimia succiniciproducens (strain KCTC 0769BP / MBEL55E).